The following is a 666-amino-acid chain: Transketolase (666 aa).

Residue histidine 26 coordinates substrate. Thiamine diphosphate contacts are provided by residues histidine 66 and 114 to 116 (GPL). Aspartate 155 lines the Mg(2+) pocket. Thiamine diphosphate is bound by residues glycine 156 and asparagine 185. 2 residues coordinate Mg(2+): asparagine 185 and isoleucine 187. Substrate contacts are provided by histidine 261, arginine 358, and serine 385. Thiamine diphosphate is bound at residue histidine 261. Glutamate 411 acts as the Proton donor in catalysis. Position 437 (phenylalanine 437) interacts with thiamine diphosphate. Residues histidine 461, aspartate 469, and arginine 520 each contribute to the substrate site.

The protein belongs to the transketolase family. In terms of assembly, homodimer. Mg(2+) serves as cofactor. Requires Ca(2+) as cofactor. The cofactor is Mn(2+). Co(2+) is required as a cofactor. It depends on thiamine diphosphate as a cofactor.

It carries out the reaction D-sedoheptulose 7-phosphate + D-glyceraldehyde 3-phosphate = aldehydo-D-ribose 5-phosphate + D-xylulose 5-phosphate. Functionally, catalyzes the transfer of a two-carbon ketol group from a ketose donor to an aldose acceptor, via a covalent intermediate with the cofactor thiamine pyrophosphate. This is Transketolase (tkt) from Buchnera aphidicola subsp. Baizongia pistaciae (strain Bp).